We begin with the raw amino-acid sequence, 189 residues long: dCTP deaminase, dUMP-forming (189 aa).

Residues 101–106 (KSSLGR), Asp-119, 127–129 (TLE), Gln-148, Tyr-162, and Gln-174 each bind dCTP. The active-site Proton donor/acceptor is the Glu-129. The interval 163–189 (GSSEAGSKYQGQRGPTPSKAYLNFNRS) is disordered.

Belongs to the dCTP deaminase family. As to quaternary structure, homotrimer.

The catalysed reaction is dCTP + 2 H2O = dUMP + NH4(+) + diphosphate. It functions in the pathway pyrimidine metabolism; dUMP biosynthesis; dUMP from dCTP: step 1/1. Functionally, bifunctional enzyme that catalyzes both the deamination of dCTP to dUTP and the hydrolysis of dUTP to dUMP without releasing the toxic dUTP intermediate. The chain is dCTP deaminase, dUMP-forming from Rhodococcus erythropolis (strain PR4 / NBRC 100887).